The sequence spans 289 residues: Syntaxin-2 (289 aa).

Over 1–265 the chain is Cytoplasmic; the sequence is MRDRLPDLTA…KYQSKARRKK (265 aa). A coiled-coil region spans residues 68–101; that stretch reads EGKIKEELEDLDKEIKKTANRIRGKLKSIEQSCD. Residues 192-254 form the t-SNARE coiled-coil homology domain; sequence LNEIESRHKD…EHAKEETKKA (63 aa). Residues 266 to 289 form a helical; Anchor for type IV membrane protein membrane-spanning segment; that stretch reads WIIAAVAVAVIAVLALIIGLSVGK.

The protein belongs to the syntaxin family. In terms of assembly, interacts with SYT6 and SYT8; the interaction is Ca(2+)-dependent.

Its subcellular location is the membrane. In terms of biological role, essential for epithelial morphogenesis. May mediate Ca(2+)-regulation of exocytosis acrosomal reaction in sperm. This is Syntaxin-2 (Stx2) from Mus musculus (Mouse).